An 80-amino-acid chain; its full sequence is Putative membrane protein insertion efficiency factor (80 aa).

Residues 61 to 80 (KTGKDPIPDHFSLKRNQEGE) form a disordered region. Basic and acidic residues predominate over residues 62–80 (TGKDPIPDHFSLKRNQEGE).

This sequence belongs to the UPF0161 family.

The protein resides in the cell membrane. Functionally, could be involved in insertion of integral membrane proteins into the membrane. In Streptococcus pneumoniae (strain CGSP14), this protein is Putative membrane protein insertion efficiency factor.